A 192-amino-acid polypeptide reads, in one-letter code: Erythropoietin (192 aa).

Residues 1–25 (MGARDCTPLLMLSFLLFPLGFPVLG) form the signal peptide. Intrachain disulfides connect C32–C187 and C54–C58. N-linked (GlcNAc...) asparagine glycosylation is present at N49. N-linked (GlcNAc...) asparagine glycans are attached at residues N63 and N108.

It belongs to the EPO/TPO family. As to expression, produced by kidney or liver of adult mammals and by liver of fetal or neonatal mammals.

The protein localises to the secreted. Functionally, hormone involved in the regulation of erythrocyte proliferation and differentiation and the maintenance of a physiological level of circulating erythrocyte mass. Binds to EPOR leading to EPOR dimerization and JAK2 activation thereby activating specific downstream effectors, including STAT1 and STAT3. This is Erythropoietin (EPO) from Bos mutus grunniens (Wild yak).